We begin with the raw amino-acid sequence, 418 residues long: Tyrosine--tRNA ligase (418 aa).

Y34 provides a ligand contact to L-tyrosine. The 'HIGH' region signature appears at 39–48; it reads PTADSLHLGH. 2 residues coordinate L-tyrosine: Y169 and Q173. The 'KMSKS' region motif lies at 229-233; sequence KFGKS. Position 232 (K232) interacts with ATP. The region spanning 352-418 is the S4 RNA-binding domain; the sequence is LNIVELLVNA…GKKKNFVLTY (67 aa).

This sequence belongs to the class-I aminoacyl-tRNA synthetase family. TyrS type 1 subfamily. In terms of assembly, homodimer.

The protein resides in the cytoplasm. The enzyme catalyses tRNA(Tyr) + L-tyrosine + ATP = L-tyrosyl-tRNA(Tyr) + AMP + diphosphate + H(+). In terms of biological role, catalyzes the attachment of tyrosine to tRNA(Tyr) in a two-step reaction: tyrosine is first activated by ATP to form Tyr-AMP and then transferred to the acceptor end of tRNA(Tyr). The sequence is that of Tyrosine--tRNA ligase from Streptococcus thermophilus (strain ATCC BAA-491 / LMD-9).